The primary structure comprises 64 residues: Metallothionein (64 aa).

It belongs to the metallothionein superfamily. Type 4 family.

Its function is as follows. Metallothioneins have a high content of cysteine residues that bind various heavy metals. This Sterechinus neumayeri (Antarctic sea urchin) protein is Metallothionein.